Here is a 286-residue protein sequence, read N- to C-terminus: Deleted in azoospermia-like (286 aa).

The 76-residue stretch at 30-105 (NTVFVGGIDI…KKLKLGPAIR (76 aa)) folds into the RRM domain. Residues 155 to 180 (ACPYPSSPPMAIQQIPVGCQQPSYFQ) form the DAZ domain.

The protein belongs to the RRM DAZ family. As to quaternary structure, interacts with the C-terminus of pabp1 and with epabp. Prior to oocyte maturation, found in a complex with epabp and pum2 proteins and spdy1 mRNA; pum2 dissociates from the complex during maturation. As to expression, germ-line specific; expressed in adult testis and ovary. Localized specifically to the oocyte and embryonic germ plasm and to migrating primordial germ cells (PGCs).

The protein resides in the cytoplasm. RNA-binding protein that is required for primordial germ cell (PGC) differentiation and indirectly necessary for the migration of PGCs through the endoderm. May promote meiotic cell division during spermatogenesis. Shows a preference for G- and U-rich RNAs and probably binds the 3'-UTR of target mRNAs. Stimulates the initiation of translation of mRNAs through the recruitment of poly(A)-binding proteins (PABPs). This chain is Deleted in azoospermia-like, found in Xenopus tropicalis (Western clawed frog).